We begin with the raw amino-acid sequence, 479 residues long: Pup--protein ligase (479 aa).

Position 17 (Glu-17) interacts with Mg(2+). Arg-62 serves as a coordination point for ATP. Mg(2+) is bound at residue Tyr-64. The active-site Proton acceptor is the Asp-66. Mg(2+) is bound at residue Glu-72. Residues Ser-75 and Trp-432 each coordinate ATP.

Belongs to the Pup ligase/Pup deamidase family. Pup-conjugating enzyme subfamily.

It catalyses the reaction ATP + [prokaryotic ubiquitin-like protein]-L-glutamate + [protein]-L-lysine = ADP + phosphate + N(6)-([prokaryotic ubiquitin-like protein]-gamma-L-glutamyl)-[protein]-L-lysine.. The protein operates within protein degradation; proteasomal Pup-dependent pathway. It functions in the pathway protein modification; protein pupylation. Catalyzes the covalent attachment of the prokaryotic ubiquitin-like protein modifier Pup to the proteasomal substrate proteins, thereby targeting them for proteasomal degradation. This tagging system is termed pupylation. The ligation reaction involves the side-chain carboxylate of the C-terminal glutamate of Pup and the side-chain amino group of a substrate lysine. In Corynebacterium diphtheriae (strain ATCC 700971 / NCTC 13129 / Biotype gravis), this protein is Pup--protein ligase.